We begin with the raw amino-acid sequence, 335 residues long: tRNA N6-adenosine threonylcarbamoyltransferase (335 aa).

Fe cation is bound by residues H110 and H114. Substrate contacts are provided by residues 132-136 (LVSGG), D165, G178, and N271. D299 lines the Fe cation pocket.

The protein belongs to the KAE1 / TsaD family. The cofactor is Fe(2+).

Its subcellular location is the cytoplasm. It catalyses the reaction L-threonylcarbamoyladenylate + adenosine(37) in tRNA = N(6)-L-threonylcarbamoyladenosine(37) in tRNA + AMP + H(+). In terms of biological role, required for the formation of a threonylcarbamoyl group on adenosine at position 37 (t(6)A37) in tRNAs that read codons beginning with adenine. Is involved in the transfer of the threonylcarbamoyl moiety of threonylcarbamoyl-AMP (TC-AMP) to the N6 group of A37, together with TsaE and TsaB. TsaD likely plays a direct catalytic role in this reaction. This Campylobacter jejuni subsp. doylei (strain ATCC BAA-1458 / RM4099 / 269.97) protein is tRNA N6-adenosine threonylcarbamoyltransferase.